Here is a 906-residue protein sequence, read N- to C-terminus: Protein translocase subunit SecA (906 aa).

Residues glutamine 86, 104 to 108 (GEGKT), and aspartate 499 contribute to the ATP site. The segment at 862-887 (KPVVSRIDPKDRNPDDPTSWGRVSRN) is disordered. 4 residues coordinate Zn(2+): cysteine 890, cysteine 892, cysteine 901, and histidine 902.

The protein belongs to the SecA family. Monomer and homodimer. Part of the essential Sec protein translocation apparatus which comprises SecA, SecYEG and auxiliary proteins SecDF-YajC and YidC. Zn(2+) serves as cofactor.

Its subcellular location is the cell inner membrane. It is found in the cytoplasm. It carries out the reaction ATP + H2O + cellular proteinSide 1 = ADP + phosphate + cellular proteinSide 2.. Functionally, part of the Sec protein translocase complex. Interacts with the SecYEG preprotein conducting channel. Has a central role in coupling the hydrolysis of ATP to the transfer of proteins into and across the cell membrane, serving both as a receptor for the preprotein-SecB complex and as an ATP-driven molecular motor driving the stepwise translocation of polypeptide chains across the membrane. The sequence is that of Protein translocase subunit SecA from Rickettsia peacockii (strain Rustic).